The primary structure comprises 205 residues: Imidazoleglycerol-phosphate dehydratase (205 aa).

The interval 1-27 (MKQASPRAGGAKARRGQVARKTKETDV) is disordered.

The protein belongs to the imidazoleglycerol-phosphate dehydratase family.

It is found in the cytoplasm. The enzyme catalyses D-erythro-1-(imidazol-4-yl)glycerol 3-phosphate = 3-(imidazol-4-yl)-2-oxopropyl phosphate + H2O. The protein operates within amino-acid biosynthesis; L-histidine biosynthesis; L-histidine from 5-phospho-alpha-D-ribose 1-diphosphate: step 6/9. In Anaeromyxobacter sp. (strain Fw109-5), this protein is Imidazoleglycerol-phosphate dehydratase.